Reading from the N-terminus, the 396-residue chain is Probable sugar efflux transporter (396 aa).

The Cytoplasmic segment spans residues 1–14; it reads MTTNTVSRKVAWLR. A helical membrane pass occupies residues 15–35; the sequence is VVTLAVAAFIFNTTEFVPVGL. The Periplasmic segment spans residues 36–49; the sequence is LSDIAQSFHMQTAQ. The chain crosses the membrane as a helical span at residues 50–70; sequence VGIMLTIYAWVVALMSLPFML. Residues 71 to 80 lie on the Cytoplasmic side of the membrane; the sequence is MTSQVERRKL. The helical transmembrane segment at 81–101 threads the bilayer; it reads LICLFVVFIASHVLSFLSWSF. Residue threonine 102 is a topological domain, periplasmic. Residues 103 to 123 traverse the membrane as a helical segment; sequence VLVISRIGVAFAHAIFWSITA. Topologically, residues 124–135 are cytoplasmic; that stretch reads SLAIRMAPAGKR. Residues 136 to 156 traverse the membrane as a helical segment; the sequence is AQALSLIATGTALAMVLGLPL. Residues 157-169 lie on the Periplasmic side of the membrane; sequence GRIVGQYFGWRMT. Residues 170-190 form a helical membrane-spanning segment; the sequence is FFAIGIGALVTLLCLIKLLPL. Residues 191 to 208 lie on the Cytoplasmic side of the membrane; that stretch reads LPSEHSGSLKSLPLLFRR. Residues 209-229 form a helical membrane-spanning segment; that stretch reads PALMSIYLLTVVVVTAHYTAY. Topologically, residues 230 to 245 are periplasmic; that stretch reads SYIEPFVQNIAGFSAN. The chain crosses the membrane as a helical span at residues 246–266; the sequence is FATALLLLLGGAGIIGSVIFG. At 267–274 the chain is on the cytoplasmic side; sequence KLGNQYAS. The helical transmembrane segment at 275–295 threads the bilayer; the sequence is ALVSTAIALLLVCLALLLPAA. The Periplasmic segment spans residues 296–298; the sequence is NSE. A helical transmembrane segment spans residues 299-319; sequence IHLGVLSIFWGIAMMIIGLGM. Residues 320–332 are Cytoplasmic-facing; sequence QVKVLALAPDATD. A helical membrane pass occupies residues 333–353; sequence VAMALFSGIFNIGIGAGALVG. The Periplasmic segment spans residues 354-363; that stretch reads NQVSLHWSMS. The chain crosses the membrane as a helical span at residues 364 to 384; the sequence is MIGYVGAVPAFAALIWSIIIF. Residues 385-396 are Cytoplasmic-facing; it reads RRWPVTLEEQTQ.

It belongs to the major facilitator superfamily. SotB (TC 2.A.1.2) family.

The protein resides in the cell inner membrane. Involved in the efflux of sugars. The physiological role may be the reduction of the intracellular concentration of toxic sugars or sugar metabolites. The polypeptide is Probable sugar efflux transporter (Shigella flexneri).